A 767-amino-acid chain; its full sequence is DNA topoisomerase 1 (767 aa).

The segment covering M1–K23 has biased composition (basic and acidic residues). Positions M1–E200 are disordered. N-acetylserine is present on S2. A phosphoserine mark is found at S2 and S10. Basic residues predominate over residues H24–K39. Over residues K40–N110 the composition is skewed to basic and acidic residues. Residue S59 is modified to Phosphoserine. K103 participates in a covalent cross-link: Glycyl lysine isopeptide (Lys-Gly) (interchain with G-Cter in SUMO2). Residue K105 forms a Glycyl lysine isopeptide (Lys-Gly) (interchain with G-Cter in SUMO); alternate linkage. Residue K105 forms a Glycyl lysine isopeptide (Lys-Gly) (interchain with G-Cter in SUMO2); alternate linkage. The residue at position 114 (S114) is a Phosphoserine. A Glycyl lysine isopeptide (Lys-Gly) (interchain with G-Cter in SUMO); alternate cross-link involves residue K119. K119 participates in a covalent cross-link: Glycyl lysine isopeptide (Lys-Gly) (interchain with G-Cter in SUMO2); alternate. A Glycyl lysine isopeptide (Lys-Gly) (interchain with G-Cter in SUMO1); alternate cross-link involves residue K119. Positions P131–E168 are enriched in basic and acidic residues. Glycyl lysine isopeptide (Lys-Gly) (interchain with G-Cter in SUMO2) cross-links involve residues K136 and K150. K155 participates in a covalent cross-link: Glycyl lysine isopeptide (Lys-Gly) (interchain with G-Cter in SUMO); alternate. A Glycyl lysine isopeptide (Lys-Gly) (interchain with G-Cter in SUMO2); alternate cross-link involves residue K155. Residues K160 and K166 each participate in a glycyl lysine isopeptide (Lys-Gly) (interchain with G-Cter in SUMO2) cross-link. Residue K174 forms a Glycyl lysine isopeptide (Lys-Gly) (interchain with G-Cter in SUMO2); alternate linkage. K174 is subject to N6-acetyllysine; alternate. Residues K181 to E200 are compositionally biased toward basic and acidic residues. Residue K206 forms a Glycyl lysine isopeptide (Lys-Gly) (interchain with G-Cter in SUMO2) linkage. K282 is subject to N6-acetyllysine. K338 participates in a covalent cross-link: Glycyl lysine isopeptide (Lys-Gly) (interchain with G-Cter in SUMO2). Interaction with DNA stretches follow at residues K427–Y428 and R490–K495. The region spanning S434–F767 is the Topo IB-type catalytic domain. Phosphoserine; by CK2 is present on S508. A Glycyl lysine isopeptide (Lys-Gly) (interchain with G-Cter in SUMO2) cross-link involves residue K551. The tract at residues T587–K589 is interaction with DNA. Glycyl lysine isopeptide (Lys-Gly) (interchain with G-Cter in SUMO2) cross-links involve residues K644, K702, and K714. Y725 serves as the catalytic O-(3'-phospho-DNA)-tyrosine intermediate.

The protein belongs to the type IB topoisomerase family. As to quaternary structure, monomer. Interacts with ERCC6. Interacts with TPRN; TPRN interacts with a number of DNA damage response proteins, is recruited to sites of DNA damage and may play a role in DNA damage repair. Post-translationally, sumoylated. Lys-119 is the main site of sumoylation. Sumoylation plays a role in partitioning TOP1 between nucleoli and nucleoplasm. Levels are dramatically increased on camptothecin (CPT) treatment. In terms of processing, phosphorylation at Ser-508 by CK2 increases binding to supercoiled DNA and sensitivity to camptothecin.

The protein localises to the nucleus. Its subcellular location is the nucleolus. It localises to the nucleoplasm. The enzyme catalyses ATP-independent breakage of single-stranded DNA, followed by passage and rejoining.. Its function is as follows. Releases the supercoiling and torsional tension of DNA introduced during the DNA replication and transcription by transiently cleaving and rejoining one strand of the DNA duplex. Introduces a single-strand break via transesterification at a target site in duplex DNA. The scissile phosphodiester is attacked by the catalytic tyrosine of the enzyme, resulting in the formation of a DNA-(3'-phosphotyrosyl)-enzyme intermediate and the expulsion of a 5'-OH DNA strand. The free DNA strand then rotates around the intact phosphodiester bond on the opposing strand, thus removing DNA supercoils. Finally, in the religation step, the DNA 5'-OH attacks the covalent intermediate to expel the active-site tyrosine and restore the DNA phosphodiester backbone. Regulates the alternative splicing of tissue factor (F3) pre-mRNA in endothelial cells. Involved in the circadian transcription of the core circadian clock component BMAL1 by altering the chromatin structure around the ROR response elements (ROREs) on the BMAL1 promoter. The chain is DNA topoisomerase 1 (Top1) from Rattus norvegicus (Rat).